A 299-amino-acid chain; its full sequence is tRNA pseudouridine synthase B (299 aa).

The active-site Nucleophile is D38.

The protein belongs to the pseudouridine synthase TruB family. Type 1 subfamily.

The enzyme catalyses uridine(55) in tRNA = pseudouridine(55) in tRNA. Functionally, responsible for synthesis of pseudouridine from uracil-55 in the psi GC loop of transfer RNAs. The polypeptide is tRNA pseudouridine synthase B (Alkaliphilus oremlandii (strain OhILAs) (Clostridium oremlandii (strain OhILAs))).